The chain runs to 536 residues: Ribulokinase (536 aa).

It belongs to the ribulokinase family.

It catalyses the reaction D-ribulose + ATP = D-ribulose 5-phosphate + ADP + H(+). The catalysed reaction is L-ribulose + ATP = L-ribulose 5-phosphate + ADP + H(+). The protein operates within carbohydrate degradation; L-arabinose degradation via L-ribulose; D-xylulose 5-phosphate from L-arabinose (bacterial route): step 2/3. The protein is Ribulokinase of Staphylococcus epidermidis (strain ATCC 12228 / FDA PCI 1200).